The following is a 698-amino-acid chain: Vertnin (698 aa).

This sequence belongs to the vertnin family.

The protein localises to the nucleus. Functionally, acts as a transcription factor that regulates development of thoracic vertebrae. This Sus scrofa (Pig) protein is Vertnin (VRTN).